A 562-amino-acid polypeptide reads, in one-letter code: Bacillolysin (562 aa).

An N-terminal signal peptide occupies residues 1–24 (MKKKKQALKVLLSVGILSSSFAFA). Positions 25-245 (HTSSAAPNNV…KQAAKPAAKP (221 aa)) are cleaved as a propeptide — activation peptide. 3 residues coordinate Ca(2+): aspartate 303, aspartate 305, and aspartate 384. Histidine 388 provides a ligand contact to Zn(2+). Glutamate 389 is a catalytic residue. Histidine 392 and glutamate 412 together coordinate Zn(2+). Residues glutamate 423, asparagine 429, aspartate 431, glutamate 433, glutamate 436, tyrosine 439, threonine 440, and aspartate 446 each coordinate Ca(2+). Histidine 477 functions as the Proton donor in the catalytic mechanism.

It belongs to the peptidase M4 family. Requires Ca(2+) as cofactor. The cofactor is Zn(2+).

Its subcellular location is the secreted. The catalysed reaction is Similar, but not identical, to that of thermolysin.. Its function is as follows. Extracellular zinc metalloprotease. The protein is Bacillolysin of Priestia megaterium (strain ATCC 14581 / DSM 32 / CCUG 1817 / JCM 2506 / NBRC 15308 / NCIMB 9376 / NCTC 10342 / NRRL B-14308 / VKM B-512 / Ford 19) (Bacillus megaterium).